The chain runs to 589 residues: Protein NRT1/ PTR FAMILY 4.7 (589 aa).

Helical transmembrane passes span 59–79, 105–125, 127–147, 160–180, 201–221, 230–250, 344–364, 383–403, 429–449, 471–491, 520–540, and 560–580; these read GMLAASFVLVVEVLENLAFLA, AFMGTAFFLALLGGFLADAFF, TFHIYLVSAAIEFLGLMVLTV, VFLFVGLYLVALGVGGIKGSL, FFFNYFIFSLSCGALIAVTVV, WSYGFGVSTAAILISVPVFLA, IVIKILPIFMSTIMLNCCLAQ, FTVPPAALPVFPVVFMMILAP, IGTGLVLSIVAMAVAALVETK, LPITFLWVAIQYVFLGSADLF, LAMGYYFSSVLVSAVNFVTGL, and FYWLMCVLSGINFLHYLFWAS.

The protein belongs to the major facilitator superfamily. Proton-dependent oligopeptide transporter (POT/PTR) (TC 2.A.17) family. Expressed in flowers.

The protein resides in the membrane. In Arabidopsis thaliana (Mouse-ear cress), this protein is Protein NRT1/ PTR FAMILY 4.7 (NPF4.7).